The primary structure comprises 212 residues: Large ribosomal subunit protein uL1 (212 aa).

This sequence belongs to the universal ribosomal protein uL1 family. Part of the 50S ribosomal subunit.

In terms of biological role, binds directly to 23S rRNA. Probably involved in E site tRNA release. Its function is as follows. Protein L1 is also a translational repressor protein, it controls the translation of its operon by binding to its mRNA. This chain is Large ribosomal subunit protein uL1, found in Haloferax volcanii (strain ATCC 29605 / DSM 3757 / JCM 8879 / NBRC 14742 / NCIMB 2012 / VKM B-1768 / DS2) (Halobacterium volcanii).